Reading from the N-terminus, the 358-residue chain is tRNA-specific 2-thiouridylase MnmA (358 aa).

ATP is bound by residues 6 to 13 (ALSGGVDS) and M32. C103 acts as the Nucleophile in catalysis. C103 and C201 are disulfide-bonded. G127 serves as a coordination point for ATP. Residues 151 to 153 (KDQ) are interaction with tRNA. C201 serves as the catalytic Cysteine persulfide intermediate.

It belongs to the MnmA/TRMU family.

It is found in the cytoplasm. It catalyses the reaction S-sulfanyl-L-cysteinyl-[protein] + uridine(34) in tRNA + AH2 + ATP = 2-thiouridine(34) in tRNA + L-cysteinyl-[protein] + A + AMP + diphosphate + H(+). Functionally, catalyzes the 2-thiolation of uridine at the wobble position (U34) of tRNA, leading to the formation of s(2)U34. This chain is tRNA-specific 2-thiouridylase MnmA, found in Thermotoga petrophila (strain ATCC BAA-488 / DSM 13995 / JCM 10881 / RKU-1).